We begin with the raw amino-acid sequence, 95 residues long: RING finger protein Z (95 aa).

A compositionally biased stretch (polar residues) spans 1-17; that stretch reads MGNCNRTQKPSSSSNNL. Positions 1–25 are disordered; sequence MGNCNRTQKPSSSSNNLEKPPQAAE. G2 is lipidated: N-myristoyl glycine; by host. The RING-type; atypical zinc-finger motif lies at 40–76; the sequence is CKCCWFADKNLITCSDHYLCLRCHQIMLRNSELCNIC. An ASAP motif motif is present at residues 90–93; the sequence is ASAP.

This sequence belongs to the arenaviridae Z protein family. Interacts with protein NP; this interaction probably directs the encapsidated genome to budding sites. Interacts (via RING domain) with polymerase L; this interaction inhibits viral transcription and replication, Z partially blocks the product exit tunnel for the releasing nascent RNA product. Interacts with the glycoprotein complex; this interaction plays a role in virion budding. Interacts with host eIF4E; this interaction results in eIF4E reduced affinity for its substrate, the 5'-m7 G cap structure. Interacts (via late-budding domain) with host TSG101; this interaction is essential for budding and release of viral particles. Interacts with host RPLP0; this interaction may serve to load ribosome-like particles inside the virion. Interacts with host PML; this interaction induces PML bodies redistribution in the cytoplasm upon viral infection. Post-translationally, myristoylation is required for the role of RING finger protein Z in assembly and budding.

The protein resides in the virion. It localises to the host cytoplasm. Its subcellular location is the host perinuclear region. It is found in the host cell membrane. In terms of biological role, plays a crucial role in virion assembly and budding. Expressed late in the virus life cycle, it acts as an inhibitor of viral transcription and RNA synthesis by interacting with the viral polymerase L. Presumably recruits the NP encapsidated genome to cellular membranes at budding sites via direct interaction with NP. Plays critical roles in the final steps of viral release by interacting with host TSG101, a member of the vacuolar protein-sorting pathway and using other cellular host proteins involved in vesicle formation pathway. The budding of the virus progeny occurs after association of protein Z with the viral glycoprotein complex SSP-GP1-GP2 at the cell periphery, step that requires myristoylation of protein Z. Also selectively represses protein production by associating with host eIF4E. In cell-based minigenome assay, has an inhibitory effect on the ribonucleoprotein machinery (vRNP), which is responsible for the replication and transcription of the viral genome. The protein is RING finger protein Z of Tacaribe virus (strain Franze-Fernandez) (TCRV).